Consider the following 258-residue polypeptide: Snake venom serine protease CL2 (258 aa).

An N-terminal signal peptide occupies residues 1–18 (MVLIRVLANLLIIQLSYA). A propeptide spanning residues 19 to 24 (QKSSEL) is cleaved from the precursor. A Peptidase S1 domain is found at 25–249 (VIGGDECNIN…YTDWIKSIIA (225 aa)). 6 disulfides stabilise this stretch: C31-C163, C50-C66, C98-C256, C142-C210, C174-C189, and C200-C225. N44 is a glycosylation site (N-linked (GlcNAc...) asparagine). H65 (charge relay system) is an active-site residue. N-linked (GlcNAc...) asparagine glycosylation occurs at N103. Catalysis depends on D110, which acts as the Charge relay system. The N-linked (GlcNAc...) asparagine glycan is linked to N121. The active-site Charge relay system is the S204. A glycan (N-linked (GlcNAc...) asparagine) is linked at N251.

The protein belongs to the peptidase S1 family. Snake venom subfamily. In terms of assembly, monomer. As to expression, expressed by the venom gland.

It is found in the secreted. Functionally, snake venom serine protease that may act in the hemostasis system of the prey. The polypeptide is Snake venom serine protease CL2 (Trimeresurus stejnegeri (Chinese green tree viper)).